The sequence spans 307 residues: Leucine-rich repeat-containing protein 59 (307 aa).

Met1 carries the post-translational modification N-acetylmethionine. Thr2 is subject to N-acetylthreonine; in Leucine-rich repeat-containing protein 59, N-terminally processed. Residues 2 to 244 (TKTGSKGGNL…KPPPRKHNRS (243 aa)) lie on the Cytoplasmic side of the membrane. 5 LRR repeats span residues 10 to 31 (NLRD…NEVP), 40 to 62 (KATV…CGLT), 63 to 84 (HLVK…FGRL), 86 to 107 (NLQH…FAQL), and 109 to 128 (NLKW…AKVA). Phosphoserine occurs at positions 23 and 25. At Lys73 the chain carries N6-succinyllysine. Position 135 is an N6-acetyllysine (Lys135). The stretch at 148 to 216 (MKAVQADQER…KASKREQEKK (69 aa)) forms a coiled coil. The disordered stretch occupies residues 150–242 (AVQADQERER…PRKPPPRKHN (93 aa)). A compositionally biased stretch (basic and acidic residues) spans 154–221 (DQERERQRRL…EQEKKPKKET (68 aa)). Residues 229–242 (SGSRPRKPPPRKHN) are compositionally biased toward basic residues. A helical membrane pass occupies residues 245-265 (WAVLKGLLLLLLLCVAGGLVV). Over 266-307 (CRVTGLQQQPLCTSVNAIYDNAVQGLRHHEILQWVLQTDSQQ) the chain is Lumenal.

Can form homodimers. Interacts with SGO1. Interacts with FGF1.

It is found in the microsome membrane. The protein resides in the endoplasmic reticulum membrane. Its subcellular location is the nucleus envelope. Functionally, required for nuclear import of FGF1, but not that of FGF2. Might regulate nuclear import of exogenous FGF1 by facilitating interaction with the nuclear import machinery and by transporting cytosolic FGF1 to, and possibly through, the nuclear pores. The sequence is that of Leucine-rich repeat-containing protein 59 (Lrrc59) from Rattus norvegicus (Rat).